The following is a 266-amino-acid chain: Secreted RxLR effector protein 128 (266 aa).

A signal peptide spans 1–18; that stretch reads MRGAFYTAIALLIGRSQT. Positions 48 to 63 match the RxLR-dEER motif; the sequence is RYLRDGLAHSATNEER.

It belongs to the RxLR effector family.

The protein resides in the secreted. The protein localises to the host nucleus. In terms of biological role, secreted effector that dos not suppress the host cell death induced by cell death-inducing proteins. In Plasmopara viticola (Downy mildew of grapevine), this protein is Secreted RxLR effector protein 128.